A 288-amino-acid chain; its full sequence is Acetyl-coenzyme A carboxylase carboxyl transferase subunit beta (288 aa).

The CoA carboxyltransferase N-terminal domain occupies 33-288 (LFSQCPGCKH…LVRLHGGSPR (256 aa)). Residues Cys37, Cys40, Cys55, and Cys58 each coordinate Zn(2+). The segment at 37 to 58 (CPGCKHTIYQKDLGSERICPHC) adopts a C4-type zinc-finger fold.

This sequence belongs to the AccD/PCCB family. Acetyl-CoA carboxylase is a heterohexamer composed of biotin carboxyl carrier protein (AccB), biotin carboxylase (AccC) and two subunits each of ACCase subunit alpha (AccA) and ACCase subunit beta (AccD). It depends on Zn(2+) as a cofactor.

The protein resides in the cytoplasm. The catalysed reaction is N(6)-carboxybiotinyl-L-lysyl-[protein] + acetyl-CoA = N(6)-biotinyl-L-lysyl-[protein] + malonyl-CoA. It functions in the pathway lipid metabolism; malonyl-CoA biosynthesis; malonyl-CoA from acetyl-CoA: step 1/1. In terms of biological role, component of the acetyl coenzyme A carboxylase (ACC) complex. Biotin carboxylase (BC) catalyzes the carboxylation of biotin on its carrier protein (BCCP) and then the CO(2) group is transferred by the transcarboxylase to acetyl-CoA to form malonyl-CoA. In Streptococcus pneumoniae serotype 4 (strain ATCC BAA-334 / TIGR4), this protein is Acetyl-coenzyme A carboxylase carboxyl transferase subunit beta.